A 119-amino-acid chain; its full sequence is Large ribosomal subunit protein uL18 (119 aa).

It belongs to the universal ribosomal protein uL18 family. In terms of assembly, part of the 50S ribosomal subunit; part of the 5S rRNA/L5/L18/L25 subcomplex. Contacts the 5S and 23S rRNAs.

Its function is as follows. This is one of the proteins that bind and probably mediate the attachment of the 5S RNA into the large ribosomal subunit, where it forms part of the central protuberance. In Roseobacter denitrificans (strain ATCC 33942 / OCh 114) (Erythrobacter sp. (strain OCh 114)), this protein is Large ribosomal subunit protein uL18.